Reading from the N-terminus, the 341-residue chain is Large ribosomal subunit protein uL10 (341 aa).

Positions 301-341 (EAAPAAAPAAEEKAEEEKKEEEEEKKEDQELSGLDSIFGGF) are disordered.

The protein belongs to the universal ribosomal protein uL10 family. Part of the 50S ribosomal subunit. Forms part of the ribosomal stalk which helps the ribosome interact with GTP-bound translation factors. Forms a heptameric L10(L12)2(L12)2(L12)2 complex, where L10 forms an elongated spine to which the L12 dimers bind in a sequential fashion.

Functionally, forms part of the ribosomal stalk, playing a central role in the interaction of the ribosome with GTP-bound translation factors. In Aeropyrum pernix (strain ATCC 700893 / DSM 11879 / JCM 9820 / NBRC 100138 / K1), this protein is Large ribosomal subunit protein uL10.